A 402-amino-acid chain; its full sequence is Methylthioribose-1-phosphate isomerase (402 aa).

The active-site Proton donor is the D275.

The protein belongs to the eIF-2B alpha/beta/delta subunits family. MtnA subfamily.

The protein resides in the cytoplasm. Its subcellular location is the nucleus. It catalyses the reaction 5-(methylsulfanyl)-alpha-D-ribose 1-phosphate = 5-(methylsulfanyl)-D-ribulose 1-phosphate. The protein operates within amino-acid biosynthesis; L-methionine biosynthesis via salvage pathway; L-methionine from S-methyl-5-thio-alpha-D-ribose 1-phosphate: step 1/6. Catalyzes the interconversion of methylthioribose-1-phosphate (MTR-1-P) into methylthioribulose-1-phosphate (MTRu-1-P). This is Methylthioribose-1-phosphate isomerase from Clavispora lusitaniae (strain ATCC 42720) (Yeast).